The primary structure comprises 241 residues: Carboxysome assembly protein CcmN (241 aa).

The segment at 123–206 (GASSPTTDSV…PTAPTVVTTA (84 aa)) is disordered. The span at 185-195 (QISSNRSPGES) shows a compositional bias: polar residues. Residues 196–206 (TPTAPTVVTTA) are compositionally biased toward low complexity. The Encapsulation peptide signature appears at 219–241 (VVGQVYINQLLLTLFPERRYFSS).

Belongs to the CcmN family. As to quaternary structure, interacts with full-length and the N-terminal 249 residues of CcmM; a probable CcmM-CcaA-CcmN complex can also be isolated. Interacts with CcmK.

It localises to the carboxysome. Required for carboxysome formation; the N-terminus interacts with CcmM which itself binds RuBisCO (ribulose bisphosphate carboxylase, rbcL-rbcS). May also contact shell protein CcmK to help assemble the carboxysome. Functionally, beta-carboxysome assembly initiates when soluble RuBisCO is condensed into a liquid matrix in a pre-carboxysome by the RbcS-like domains of probably both forms of CcmM. CcmN interacts with the N-terminus of full-length CcmM, and then recruits the CcmK major shell protein via CcmN's encapsulation peptide. Shell formation requires CcmK proteins and CcmO. CcmL caps the otherwise elongated carboxysome. Once fully encapsulated carboxysomes are formed, they migrate within the cell probably via interactions with the cytoskeleton. In Synechocystis sp. (strain ATCC 27184 / PCC 6803 / Kazusa), this protein is Carboxysome assembly protein CcmN.